The chain runs to 631 residues: Putative ATP-dependent DNA helicase Q1 (631 aa).

The Helicase ATP-binding domain occupies 118 to 293 (INAVMSKEDA…KDMLGIQAAL (176 aa)). 131–138 (LSTGGGKS) is an ATP binding site. The DEVH box motif lies at 237 to 240 (DEVH). The 149-residue stretch at 318–466 (CTEEIAKTIK…NLYNMVRYAA (149 aa)) folds into the Helicase C-terminal domain. Zn(2+)-binding residues include cysteine 471, cysteine 489, cysteine 493, and cysteine 496. A disordered region spans residues 610-631 (ESKSRKRKASSSVEEEDVMVLD). A compositionally biased stretch (acidic residues) spans 622–631 (VEEEDVMVLD).

Belongs to the helicase family. RecQ subfamily. It depends on Zn(2+) as a cofactor.

Its subcellular location is the nucleus. It carries out the reaction Couples ATP hydrolysis with the unwinding of duplex DNA by translocating in the 3'-5' direction.. The catalysed reaction is ATP + H2O = ADP + phosphate + H(+). Functionally, DNA helicase that may play a role in the repair of DNA that is damaged by ultraviolet light or other mutagens. Exhibits a magnesium-dependent ATP-dependent DNA-helicase activity that unwinds single- and double-stranded DNA in a 3'-5' direction. This chain is Putative ATP-dependent DNA helicase Q1, found in Caenorhabditis elegans.